Reading from the N-terminus, the 472-residue chain is Glutamate--tRNA ligase (472 aa).

Positions Pro-10–Gly-20 match the 'HIGH' region motif. The Zn(2+) site is built by Cys-99, Cys-101, Cys-126, and His-128. The 'KMSKS' region motif lies at Lys-238–Arg-242. ATP is bound at residue Lys-241.

Belongs to the class-I aminoacyl-tRNA synthetase family. Glutamate--tRNA ligase type 1 subfamily. Monomer. It depends on Zn(2+) as a cofactor.

It localises to the cytoplasm. It carries out the reaction tRNA(Glu) + L-glutamate + ATP = L-glutamyl-tRNA(Glu) + AMP + diphosphate. Its function is as follows. Catalyzes the attachment of glutamate to tRNA(Glu) in a two-step reaction: glutamate is first activated by ATP to form Glu-AMP and then transferred to the acceptor end of tRNA(Glu). This Proteus mirabilis (strain HI4320) protein is Glutamate--tRNA ligase.